The primary structure comprises 631 residues: Chaperone protein DnaK (631 aa).

At threonine 197 the chain carries Phosphothreonine; by autocatalysis. The tract at residues 600-631 (KKENPQAADAQQGNTANAGKKKDDDVIDAEVE) is disordered.

This sequence belongs to the heat shock protein 70 family.

Acts as a chaperone. This Wolinella succinogenes (strain ATCC 29543 / DSM 1740 / CCUG 13145 / JCM 31913 / LMG 7466 / NCTC 11488 / FDC 602W) (Vibrio succinogenes) protein is Chaperone protein DnaK.